The chain runs to 324 residues: HPr kinase/phosphorylase (324 aa).

Residues His-146 and Lys-167 contribute to the active site. Position 161–168 (161–168) interacts with ATP; that stretch reads GDSGLGKS. Ser-168 contacts Mg(2+). Residue Asp-185 is the Proton acceptor; for phosphorylation activity. Proton donor; for dephosphorylation activity of the active site. The segment at 209-218 is important for the catalytic mechanism of both phosphorylation and dephosphorylation; sequence LEVRGLGLLD. Glu-210 is a binding site for Mg(2+). The active site involves Arg-250. Residues 271-276 form an important for the catalytic mechanism of dephosphorylation region; that stretch reads QVAAGR.

Belongs to the HPrK/P family. Homohexamer. Mg(2+) is required as a cofactor.

The catalysed reaction is [HPr protein]-L-serine + ATP = [HPr protein]-O-phospho-L-serine + ADP + H(+). It catalyses the reaction [HPr protein]-O-phospho-L-serine + phosphate + H(+) = [HPr protein]-L-serine + diphosphate. Functionally, catalyzes the ATP- as well as the pyrophosphate-dependent phosphorylation of a specific serine residue in HPr, a phosphocarrier protein of the phosphoenolpyruvate-dependent sugar phosphotransferase system (PTS). HprK/P also catalyzes the pyrophosphate-producing, inorganic phosphate-dependent dephosphorylation (phosphorolysis) of seryl-phosphorylated HPr (P-Ser-HPr). This is HPr kinase/phosphorylase from Ralstonia pickettii (strain 12J).